The chain runs to 352 residues: Fe(3+) ions import ATP-binding protein FbpC (352 aa).

In terms of domain architecture, ABC transporter spans 5-239 (LHIGHLSKSF…PADLDAVLFI (235 aa)). 37–44 (GASGCGKT) serves as a coordination point for ATP.

This sequence belongs to the ABC transporter superfamily. Fe(3+) ion importer (TC 3.A.1.10) family. In terms of assembly, the complex is composed of two ATP-binding proteins (FbpC), two transmembrane proteins (FbpB) and a solute-binding protein (FbpA).

Its subcellular location is the cell inner membrane. It catalyses the reaction Fe(3+)(out) + ATP + H2O = Fe(3+)(in) + ADP + phosphate + H(+). In terms of biological role, part of the ABC transporter complex FbpABC involved in Fe(3+) ions import. Responsible for energy coupling to the transport system. This is Fe(3+) ions import ATP-binding protein FbpC from Neisseria gonorrhoeae.